Reading from the N-terminus, the 84-residue chain is DNA-directed RNA polymerase subunit Rpo5 (84 aa).

The protein belongs to the archaeal Rpo5/eukaryotic RPB5 RNA polymerase subunit family. Part of the RNA polymerase complex.

The protein localises to the cytoplasm. It carries out the reaction RNA(n) + a ribonucleoside 5'-triphosphate = RNA(n+1) + diphosphate. DNA-dependent RNA polymerase (RNAP) catalyzes the transcription of DNA into RNA using the four ribonucleoside triphosphates as substrates. This Sulfurisphaera tokodaii (strain DSM 16993 / JCM 10545 / NBRC 100140 / 7) (Sulfolobus tokodaii) protein is DNA-directed RNA polymerase subunit Rpo5.